An 89-amino-acid chain; its full sequence is MALKQQRKQEIIGEYQTHETDTGSADVQVAMLTEKITKLSAHLRNNKQDYSSQRGLLKMIGKRKRLLTYIQKQNQERYKALITRLGIRG.

The protein belongs to the universal ribosomal protein uS15 family. Part of the 30S ribosomal subunit. Forms a bridge to the 50S subunit in the 70S ribosome, contacting the 23S rRNA.

Its function is as follows. One of the primary rRNA binding proteins, it binds directly to 16S rRNA where it helps nucleate assembly of the platform of the 30S subunit by binding and bridging several RNA helices of the 16S rRNA. Forms an intersubunit bridge (bridge B4) with the 23S rRNA of the 50S subunit in the ribosome. The chain is Small ribosomal subunit protein uS15 from Trichodesmium erythraeum (strain IMS101).